A 54-amino-acid polypeptide reads, in one-letter code: Rubredoxin (54 aa).

The region spanning 2–52 (AKWVCKICGYIYDEDAGDPDNGISPGTKFEELPDDWVCPICGAPKSEFEKL) is the Rubredoxin-like domain. Fe cation-binding residues include C6, C9, C39, and C42.

It belongs to the rubredoxin family. It depends on Fe(3+) as a cofactor.

In terms of biological role, rubredoxin is a small nonheme, iron protein lacking acid-labile sulfide. Its single Fe, chelated to 4 Cys, functions as an electron acceptor and may also stabilize the conformation of the molecule. In Pyrococcus furiosus (strain ATCC 43587 / DSM 3638 / JCM 8422 / Vc1), this protein is Rubredoxin (rub).